Consider the following 533-residue polypeptide: (E)-beta-farnesene synthase (533 aa).

Residues aspartate 286, aspartate 290, asparagine 430, serine 434, and glutamate 438 each contribute to the Mg(2+) site. Residues 286-290 (DDMMD) carry the DDXXD motif motif.

The protein belongs to the terpene synthase family. Mg(2+) serves as cofactor. Co(2+) is required as a cofactor. The cofactor is Mn(2+).

Its subcellular location is the cytoplasm. The catalysed reaction is (2E,6E)-farnesyl diphosphate = (E)-beta-farnesene + diphosphate. It functions in the pathway secondary metabolite biosynthesis; terpenoid biosynthesis. Functionally, sesquiterpene cyclase catalyzing the production of sixfold more beta-farnesene than alpha-bergamotene from farnesyl diphosphate. Involved in indirect defense by producing volatile signals attracting natural enemies of herbivores. The protein is (E)-beta-farnesene synthase of Zea diploperennis (Diploperennial teosinte).